Here is a 564-residue protein sequence, read N- to C-terminus: Rhotekin (564 aa).

Omega-N-methylarginine is present on arginine 14. The 82-residue stretch at 17 to 98 (ALEMEFKRGR…LQRRKEAQVL (82 aa)) folds into the REM-1 domain. A phosphoserine mark is found at serine 30 and serine 106. Asymmetric dimethylarginine is present on arginine 230. Serine 232 is modified (phosphoserine). The 108-residue stretch at 309 to 416 (QPTASGALRV…WMEALWQLFF (108 aa)) folds into the PH domain. Residues 518 to 564 (TFSLDAAPADHSLGPSRSVAPLPPQRSPKSRGFYSKSQLGPWLQSPV) form a disordered region. Residues serine 520, serine 529, and serine 544 each carry the phosphoserine modification.

In terms of assembly, interacts via its C-terminal region with the TAX1BP3 PDZ domain. This interaction facilitates Rho-mediated activation of the c-Fos serum response element (SRE). Interacts with SEPT9. Specifically binds to GTP-bound RHOA, RHOB and RHOC and inhibits their GTPase activity. Abundantly expressed in brain and kidney. Weakly expressed in lung, testis, skeletal muscle, heart and thymus.

In terms of biological role, mediates Rho signaling to activate NF-kappa-B and may confer increased resistance to apoptosis to cells in gastric tumorigenesis. May play a novel role in the organization of septin structures. In Mus musculus (Mouse), this protein is Rhotekin.